The sequence spans 80 residues: RNA-binding protein KhpA (80 aa).

The 48-residue stretch at 33-80 (GRTVEVHVHPDDLGKVIGRGGRTATALRKLVAGIGGRGIRVDVVDTDQ) folds into the KH domain.

Belongs to the KhpA RNA-binding protein family.

It localises to the cytoplasm. Its function is as follows. A probable RNA-binding protein. The sequence is that of RNA-binding protein KhpA from Mycobacterium leprae (strain TN).